A 505-amino-acid chain; its full sequence is Prenylcysteine oxidase 1 (505 aa).

A signal peptide spans 1–27; the sequence is MGRVVAELVSSLLGLWLLLCSCGCPEG. N196, N323, and N353 each carry an N-linked (GlcNAc...) asparagine glycan.

This sequence belongs to the prenylcysteine oxidase family. The cofactor is FAD.

It is found in the lysosome. It carries out the reaction an S-polyprenyl-L-cysteine + O2 + H2O = a polyprenal + L-cysteine + H2O2. It catalyses the reaction S-(2E,6E)-farnesyl-L-cysteine + O2 + H2O = (2E,6E)-farnesal + L-cysteine + H2O2. The catalysed reaction is [(2E,6E,10E)-geranylgeranyl]-L-cysteine + O2 + H2O = (2E,6E,10E)-geranylgeranial + L-cysteine + H2O2. Functionally, prenylcysteine oxidase that cleaves the thioether bond of prenyl-L-cysteines, such as farnesylcysteine and geranylgeranylcysteine. Only active against free prenylcysteines and not prenylcysteine residues within prenylated proteins or peptides. Involved in the final step in the degradation of prenylated proteins, by degrading prenylcysteines after the protein has been degraded. The protein is Prenylcysteine oxidase 1 of Pongo abelii (Sumatran orangutan).